A 795-amino-acid chain; its full sequence is Phenylalanine--tRNA ligase beta subunit (795 aa).

A tRNA-binding domain is found at 39-148 (AGTFNGVVVG…LDAPIGTDLR (110 aa)). Positions 401 to 476 (PKVNTVQLRR…RIYGYNSIPN (76 aa)) constitute a B5 domain. Mg(2+)-binding residues include Asp454, Asp460, Glu463, and Glu464. Positions 701–794 (SKFPANRRDL…VKQRFNAELR (94 aa)) constitute an FDX-ACB domain.

This sequence belongs to the phenylalanyl-tRNA synthetase beta subunit family. Type 1 subfamily. In terms of assembly, tetramer of two alpha and two beta subunits. The cofactor is Mg(2+).

The protein resides in the cytoplasm. The enzyme catalyses tRNA(Phe) + L-phenylalanine + ATP = L-phenylalanyl-tRNA(Phe) + AMP + diphosphate + H(+). This is Phenylalanine--tRNA ligase beta subunit from Haemophilus influenzae (strain 86-028NP).